The chain runs to 430 residues: MASDLRISFQGEPSRNDPGSENLEHKPSQGPAVQEEEETYEFLRTQLSLLQNSNNSCARQELQNLYKLFHSWLQPEKHSKDEIISCLVLEQFMINGHCSDRSMLKEKWNASGRNLEKFMEDLTDESMKPPGLVHVHMQGQEALFSENMPLKEVIVHLTKQLSVGSPTGTDMETPSWTPQDTSLETGQGEWGDKENGDNIYHINDSITSQGNEIPSLLIIREEDYPRPEEDSVSLKNPLSSRKAGLGMSGSQEGSLKGPSYQDVLMEGGPGFLSQSIQVSPEPVPTHQRTEGNSTRGGHQERCREAQNSYRCEKCPKIFRYFSQLKAHQRRHNNERTFTCAECNRGFFQASDLHVHQKIHAEEKPFTCSTCEKSFSHKTNLLAHERIHTGEKPYECSLCHRSYRQSSTYHRHLRNHQKSAFRGVSSTPEAS.

Positions 1-38 (MASDLRISFQGEPSRNDPGSENLEHKPSQGPAVQEEEE) are disordered. An SCAN box domain is found at 44–126 (RTQLSLLQNS…KFMEDLTDES (83 aa)). A compositionally biased stretch (polar residues) spans 164-185 (GSPTGTDMETPSWTPQDTSLET). Disordered stretches follow at residues 164 to 196 (GSPT…KENG), 224 to 257 (YPRP…SLKG), and 281 to 300 (EPVP…GHQE). 4 consecutive C2H2-type zinc fingers follow at residues 309–331 (YRCE…QRRH), 337–359 (FTCA…QKIH), 365–387 (FTCS…ERIH), and 393–415 (YECS…LRNH).

The protein localises to the nucleus. It localises to the chromosome. The protein resides in the telomere. Its function is as follows. Embryonic stem (ES) cell-specific transcription factor required to regulate ES cell pluripotency. Binds telomeres and plays a key role in genomic stability in ES cells by regulating telomere elongation. Acts as an activator of spontaneous telomere sister chromatid exchange (T-SCE) and telomere elongation in undifferentiated ES cells. This is Zinc finger and SCAN domain-containing protein 4 (ZSCAN4) from Ailuropoda melanoleuca (Giant panda).